Reading from the N-terminus, the 785-residue chain is MSGLFAKLDPRRVQWGANWFAFRSRVLRTKPVESMLETSGGTGAHGTKLARVLSTVDLVSLGVGSCVGTGMYVVSGLVAKEMAGPGVIVSFIIAAVASILSGVCYAEFGVRVPKTTGSAYTYSYVTVGEFVAFFIGWNLILEYLIGTAAGASALSSMFDSLANHSISGFMINHIGTLNGLGKGEQSYPDILALVIGILVTVIVALGVKNSVGFNNVLNVINLVVWVFIMIAGLFFVSGSNWDEGRFLPYGWSGVMQGAATCFYAFIGFDIIATTGEEAKSPNTSIPYAITASLVTCLTAYVSVSVILTLMVPYTEIDSDAPLMEMFSLHGFQTAKYIVAIGSIAGLTVSLLGSLFPMPRVIYAMAGDGLLFRFLAHVSTYTETPAVACVVSGFLSALLALLVSLRDLIEMMSIGTLLAYTLVSVCVLLLRYQPEGDIHGFVNFLSEQNSKRKEGVLAECEKEACSPVSEGDDYGGVPTNTCGAKNLPSLGDNEMLIGKPDKSTYTASHPNYGTVDMSSGIESDETDSAYLLKLKKLLGPRYYTMRIRLGLPGKMDRPTVATGRIVTRCVVLLFILIFCFCSLIIFGSGQIADGQWWAVLLLVVLLLVLTLLVFIIIQQPENPKRLPYMAPCVPFVPASAMLVNVYLMLKLSTITWIRFGVWCFVGVLIYFGYGMWNSTLEITAREEEAHASTYQRYDMGVDDNFAVDDDLYPSGDQGPFQNWGKGGQQKQPQQEQSEPQSDGLDRLDNHRTSSSSSHSRAKSKASKPSPGFEALVVDDDLDDPLE.

15 helical membrane passes run 58 to 78 (LVSL…SGLV), 83 to 103 (AGPG…LSGV), 119 to 141 (AYTY…NLIL), 187 to 207 (YPDI…ALGV), 216 to 236 (VLNV…LFFV), 251 to 271 (WSGV…FDII), 291 to 311 (ASLV…TLMV), 337 to 357 (IVAI…LFPM), 360 to 380 (VIYA…VSTY), 384 to 404 (PAVA…LVSL), 407 to 427 (LIEM…VCVL), 568 to 588 (CVVL…FGSG), 596 to 616 (WAVL…FIII), 628 to 648 (MAPC…YLML), and 655 to 675 (WIRF…YGMW). The segment at 715 to 785 (DQGPFQNWGK…VDDDLDDPLE (71 aa)) is disordered. A compositionally biased stretch (low complexity) spans 727 to 740 (QQKQPQQEQSEPQS). Positions 775–785 (VVDDDLDDPLE) are enriched in acidic residues.

This sequence belongs to the amino acid-polyamine-organocation (APC) superfamily.

It localises to the lysosome membrane. Its function is as follows. May be involved in arginine transport. This chain is Probable cationic amino acid transporter (slc7a14a), found in Danio rerio (Zebrafish).